Here is a 791-residue protein sequence, read N- to C-terminus: Valine--tRNA ligase (791 aa).

The 'HIGH' region signature appears at 40-50 (PTVSGKMHMGH). The 'KMSKS' region signature appears at 521–525 (KMSKS). Lys524 is an ATP binding site.

It belongs to the class-I aminoacyl-tRNA synthetase family. ValS type 2 subfamily.

The protein resides in the cytoplasm. The enzyme catalyses tRNA(Val) + L-valine + ATP = L-valyl-tRNA(Val) + AMP + diphosphate. Its function is as follows. Catalyzes the attachment of valine to tRNA(Val). As ValRS can inadvertently accommodate and process structurally similar amino acids such as threonine, to avoid such errors, it has a 'posttransfer' editing activity that hydrolyzes mischarged Thr-tRNA(Val) in a tRNA-dependent manner. This is Valine--tRNA ligase from Thermoplasma acidophilum (strain ATCC 25905 / DSM 1728 / JCM 9062 / NBRC 15155 / AMRC-C165).